We begin with the raw amino-acid sequence, 464 residues long: Asparagine--tRNA ligase (464 aa).

Belongs to the class-II aminoacyl-tRNA synthetase family. As to quaternary structure, homodimer.

It is found in the cytoplasm. It carries out the reaction tRNA(Asn) + L-asparagine + ATP = L-asparaginyl-tRNA(Asn) + AMP + diphosphate + H(+). This Clostridium botulinum (strain Alaska E43 / Type E3) protein is Asparagine--tRNA ligase.